The primary structure comprises 278 residues: Undecaprenyl-diphosphatase 2 (278 aa).

Helical transmembrane passes span 43–63 (GAAFTAITQIGTEMAVLVYFW), 88–108 (ARLGWLIIVGSVPIVFLGLFF), 119–139 (LYITAVMLIVFGIVLGLADRI), 149–169 (LIWRDGILFGFAQAMALIPGV), 194–214 (FLLAVPAVFGSGFYQLFKSIG), 226–246 (LATLIAFIVGYAVIVVFLKLV), and 254–274 (FVWYRVVIGFILLALLGTGVI).

It belongs to the UppP family.

The protein localises to the cell inner membrane. The catalysed reaction is di-trans,octa-cis-undecaprenyl diphosphate + H2O = di-trans,octa-cis-undecaprenyl phosphate + phosphate + H(+). Its function is as follows. Catalyzes the dephosphorylation of undecaprenyl diphosphate (UPP). Confers resistance to bacitracin. The sequence is that of Undecaprenyl-diphosphatase 2 from Agrobacterium fabrum (strain C58 / ATCC 33970) (Agrobacterium tumefaciens (strain C58)).